The chain runs to 1173 residues: Calcium-transporting ATPase 2 (1173 aa).

The segment at 1 to 24 (MSRQDENSALLANNENNKPSYTGN) is disordered. At 1-114 (MSRQDENSAL…LQLVWAAFND (114 aa)) the chain is on the cytoplasmic side. Residues 7–17 (NSALLANNENN) show a composition bias toward low complexity. The helical transmembrane segment at 115 to 139 (KTMQLLTVAAVVSFVLGLYELWMQP) threads the bilayer. Residues 140–152 (PQYDPEGNKIKQV) are Vacuolar-facing. Residues 153–173 (DWIEGVAIMIAVFVVVLVSAA) form a helical membrane-spanning segment. Residues 174–349 (NDYQKELQFA…LADNISVYGC (176 aa)) lie on the Cytoplasmic side of the membrane. The chain crosses the membrane as a helical span at residues 350–368 (VSAIILFLVLFTRYLFYII). Residues 369-388 (PEDGRFHDLDPAQKGSKFMN) are Vacuolar-facing. Residues 389-409 (IFITSITVIVVAVPEGLPLAV) form a helical membrane-spanning segment. Residues Val-398 and Glu-403 each coordinate Ca(2+). Residues 410–899 (TLALAFATTR…RCVSVSIKKF (490 aa)) are Cytoplasmic-facing. Residue Asp-445 is the 4-aspartylphosphate intermediate of the active site. Residues Asp-445 and Thr-447 each contribute to the Mg(2+) site. ATP contacts are provided by residues Thr-447, Lys-643, 762 to 764 (TGD), Arg-816, and Lys-822. Asp-841 is a Mg(2+) binding site. An ATP-binding site is contributed by Asn-844. A helical transmembrane segment spans residues 900-922 (IQFQLIVNITAVILTFVSSVASS). Residue Asn-907 participates in Ca(2+) binding. Topologically, residues 923–929 (DETSVLT) are vacuolar. Residues 930–950 (AVQLLWINLIMDTLAALALAT) form a helical membrane-spanning segment. Ca(2+)-binding residues include Asn-937 and Asp-941. Residues 951–976 (DKPDPNIMDRKPRGRSTSLISVSTWK) are Cytoplasmic-facing. Residues 977 to 998 (MILSQATLQLIVTFILHFYGPE) form a helical membrane-spanning segment. Residues 999–1010 (LFFKKHEDEITS) are Vacuolar-facing. The chain crosses the membrane as a helical span at residues 1011–1029 (HQQQQLNAMTFNTFVWLQF). Residues 1030 to 1065 (FTMLVSRKLDEGDGISNWRGRISAANLNFFQDLGRN) lie on the Cytoplasmic side of the membrane. A helical transmembrane segment spans residues 1066 to 1086 (YYFLTIMAIIGSCQVLIMFFG). At 1087-1099 (GAPFSIARQTKSM) the chain is on the vacuolar side. Residues 1100–1120 (WITAVLCGMLSLIMGVLVRIC) traverse the membrane as a helical segment. Topologically, residues 1121-1173 (PDEVAVKVFPAAFVQRFKYVFGLEFLRKNHTGKHDDEEALLEESDSPESTAFY) are cytoplasmic.

Belongs to the cation transport ATPase (P-type) (TC 3.A.3) family.

The protein localises to the vacuole membrane. The enzyme catalyses Ca(2+)(in) + ATP + H2O = Ca(2+)(out) + ADP + phosphate + H(+). This magnesium-dependent enzyme catalyzes the hydrolysis of ATP coupled with the transport of calcium. Transports the calcium to the vacuole and participates in the control of the cytosolic free calcium. This chain is Calcium-transporting ATPase 2 (PMC1), found in Saccharomyces cerevisiae (strain ATCC 204508 / S288c) (Baker's yeast).